A 91-amino-acid chain; its full sequence is DNA-directed RNA polymerase subunit omega (91 aa).

Belongs to the RNA polymerase subunit omega family. As to quaternary structure, the RNAP catalytic core consists of 2 alpha, 1 beta, 1 beta' and 1 omega subunit. When a sigma factor is associated with the core the holoenzyme is formed, which can initiate transcription.

The enzyme catalyses RNA(n) + a ribonucleoside 5'-triphosphate = RNA(n+1) + diphosphate. In terms of biological role, promotes RNA polymerase assembly. Latches the N- and C-terminal regions of the beta' subunit thereby facilitating its interaction with the beta and alpha subunits. The polypeptide is DNA-directed RNA polymerase subunit omega (Proteus mirabilis (strain HI4320)).